The following is a 25-amino-acid chain: Toxin LyeTx 1 (25 aa).

A Leucine amide modification is found at L25.

Expressed by the venom gland.

Its subcellular location is the secreted. Has antimicrobial activity against Gram-positive bacterium S.aureus (MIC=3.79 uM), Gram-negative bacterium E.coli (MIC=7.81 uM) and yeasts C.krusei (MIC=26.3 uM) and C.neoformans (MIC=13.2 uM). Has hemolytic activity against rabbit erythrocytes. Forms pores in lipid bilayers in vitro; pore formation is reduced when cholesterol is present in the bilayers. In Lycosa erythrognatha (Wolf spider), this protein is Toxin LyeTx 1.